The following is a 191-amino-acid chain: Shikimate kinase (191 aa).

24–29 (GSGKTS) provides a ligand contact to ATP. Residue Thr-28 coordinates Mg(2+). Asp-46, Arg-70, and Gly-92 together coordinate substrate. ATP is bound at residue Arg-130. Arg-149 provides a ligand contact to substrate.

This sequence belongs to the shikimate kinase family. Monomer. It depends on Mg(2+) as a cofactor.

It is found in the cytoplasm. It carries out the reaction shikimate + ATP = 3-phosphoshikimate + ADP + H(+). It functions in the pathway metabolic intermediate biosynthesis; chorismate biosynthesis; chorismate from D-erythrose 4-phosphate and phosphoenolpyruvate: step 5/7. Its function is as follows. Catalyzes the specific phosphorylation of the 3-hydroxyl group of shikimic acid using ATP as a cosubstrate. In Synechococcus sp. (strain CC9902), this protein is Shikimate kinase.